Here is a 77-residue protein sequence, read N- to C-terminus: RNA-binding protein Hfq (77 aa).

Residues 10–70 enclose the Sm domain; sequence DAFLNHVRKA…ISTIMPGQPI (61 aa).

It belongs to the Hfq family. As to quaternary structure, homohexamer.

Its function is as follows. RNA chaperone that binds small regulatory RNA (sRNAs) and mRNAs to facilitate mRNA translational regulation in response to envelope stress, environmental stress and changes in metabolite concentrations. Also binds with high specificity to tRNAs. In Cereibacter sphaeroides (strain ATCC 17029 / ATH 2.4.9) (Rhodobacter sphaeroides), this protein is RNA-binding protein Hfq.